Here is a 328-residue protein sequence, read N- to C-terminus: Methionine import ATP-binding protein MetN 1 (328 aa).

The ABC transporter domain maps to 2–241; the sequence is ISIERLSKTY…PLSRLGRSLL (240 aa). 38–45 is an ATP binding site; sequence GRSGAGKS.

This sequence belongs to the ABC transporter superfamily. Methionine importer (TC 3.A.1.24) family. In terms of assembly, the complex is composed of two ATP-binding proteins (MetN), two transmembrane proteins (MetI) and a solute-binding protein (MetQ).

It localises to the cell inner membrane. The enzyme catalyses L-methionine(out) + ATP + H2O = L-methionine(in) + ADP + phosphate + H(+). It catalyses the reaction D-methionine(out) + ATP + H2O = D-methionine(in) + ADP + phosphate + H(+). Functionally, part of the ABC transporter complex MetNIQ involved in methionine import. Responsible for energy coupling to the transport system. The sequence is that of Methionine import ATP-binding protein MetN 1 from Yersinia pestis bv. Antiqua (strain Nepal516).